We begin with the raw amino-acid sequence, 309 residues long: MNFHTARISQVGVISRALLSSVSRRWIHVTPISLNNSGGSLFGSITENKPKEGKNRGDEDAGSFSNRLAIASDSSGEAPEVNRDSITIENDKLLQQHIISLQQPEQLASQSLLSPLKREIYEANCKINGGFYKKDTIVKLPNSSERYKLKLTKREIEVLEPSVYAQSYRIKSSMKKATLLLRLLGGLDVMKAISQCHFSNKKIAREVAELLQKGVKDGQKLGLKPEDLYISQIWTGSDGFWRKRVEFKARTRIGIISHPYIHVRCILRTKSVTKRRLAYEAHLKEQKRAPWVQLGDKPIRGVTGGVYKW.

A mitochondrion-targeting transit peptide spans 1 to 25; sequence MNFHTARISQVGVISRALLSSVSRR. The tract at residues 40–63 is disordered; that stretch reads SLFGSITENKPKEGKNRGDEDAGS. Residues 48–59 are compositionally biased toward basic and acidic residues; it reads NKPKEGKNRGDE.

Belongs to the universal ribosomal protein uL22 family. As to quaternary structure, component of the mitochondrial large ribosomal subunit (mt-LSU). Mature yeast 74S mitochondrial ribosomes consist of a small (37S) and a large (54S) subunit. The 37S small subunit contains a 15S ribosomal RNA (15S mt-rRNA) and 34 different proteins. The 54S large subunit contains a 21S rRNA (21S mt-rRNA) and 46 different proteins. uL22m forms the wall of the exit tunnel.

It is found in the mitochondrion. Functionally, component of the mitochondrial ribosome (mitoribosome), a dedicated translation machinery responsible for the synthesis of mitochondrial genome-encoded proteins, including at least some of the essential transmembrane subunits of the mitochondrial respiratory chain. The mitoribosomes are attached to the mitochondrial inner membrane and translation products are cotranslationally integrated into the membrane. This chain is Large ribosomal subunit protein uL22m (MRPL22), found in Saccharomyces cerevisiae (strain ATCC 204508 / S288c) (Baker's yeast).